A 476-amino-acid polypeptide reads, in one-letter code: Ribulose bisphosphate carboxylase large chain (476 aa).

Positions 1–2 (MS) are excised as a propeptide. Residue Pro3 is modified to N-acetylproline. Lys14 is subject to N6,N6,N6-trimethyllysine. 2 residues coordinate substrate: Asn123 and Thr173. Catalysis depends on Lys175, which acts as the Proton acceptor. A substrate-binding site is contributed by Lys177. 3 residues coordinate Mg(2+): Lys201, Asp203, and Glu204. N6-carboxylysine is present on Lys201. Arg295, His327, and Ser379 together coordinate substrate.

Belongs to the RuBisCO large chain family. Type I subfamily. Heterohexadecamer of 8 large chains and 8 small chains; disulfide-linked. The disulfide link is formed within the large subunit homodimers. Requires Mg(2+) as cofactor. In terms of processing, the disulfide bond which can form in the large chain dimeric partners within the hexadecamer appears to be associated with oxidative stress and protein turnover.

It is found in the plastid. The protein localises to the chloroplast. It catalyses the reaction 2 (2R)-3-phosphoglycerate + 2 H(+) = D-ribulose 1,5-bisphosphate + CO2 + H2O. The catalysed reaction is D-ribulose 1,5-bisphosphate + O2 = 2-phosphoglycolate + (2R)-3-phosphoglycerate + 2 H(+). Its function is as follows. RuBisCO catalyzes two reactions: the carboxylation of D-ribulose 1,5-bisphosphate, the primary event in carbon dioxide fixation, as well as the oxidative fragmentation of the pentose substrate in the photorespiration process. Both reactions occur simultaneously and in competition at the same active site. This chain is Ribulose bisphosphate carboxylase large chain, found in Barnadesia caryophylla (Xenophontia caryophylla).